A 352-amino-acid chain; its full sequence is Beta-methylmalyl-CoA dehydratase (352 aa).

The region spanning 16–129 (LGQTIVHATP…GKTGVVYVHS (114 aa)) is the MaoC-like domain. Residues 62–65 (PIDS), 85–88 (IANL), and 96–98 (GAV) contribute to the substrate site.

In terms of assembly, homodimer.

It catalyses the reaction (2R,3S)-beta-methylmalyl-CoA = 2-methylfumaryl-CoA + H2O. Involved in the glyoxylate assimilation cycle used to regenerate acetyl-CoA and produce pyruvate as universal precursor for biosynthesis. Catalyzes the reversible dehydration of beta-methylmalyl-CoA ((2R,3S)-beta-methylmalyl-CoA) to yield mesaconyl-CoA (2-methylfumaryl-CoA). The protein is Beta-methylmalyl-CoA dehydratase (mch) of Chloroflexus aurantiacus (strain ATCC 29366 / DSM 635 / J-10-fl).